We begin with the raw amino-acid sequence, 149 residues long: Large ribosomal subunit protein eL19 (149 aa).

Basic and acidic residues predominate over residues 55 to 69; that stretch reads KGISSARKKEVQEQK. Residues 55 to 93 are disordered; that stretch reads KGISSARKKEVQEQKRKGKRKGPGSRRGAKGARTPKKEK. Over residues 70–88 the composition is skewed to basic residues; the sequence is RKGKRKGPGSRRGAKGART.

Belongs to the eukaryotic ribosomal protein eL19 family. In terms of assembly, part of the 50S ribosomal subunit.

Its function is as follows. Binds to the 23S rRNA. The sequence is that of Large ribosomal subunit protein eL19 from Methanococcus vannielii.